A 729-amino-acid polypeptide reads, in one-letter code: Phosphoribosylformylglycinamidine synthase subunit PurL (729 aa).

Histidine 54 is a catalytic residue. The ATP site is built by tyrosine 57 and lysine 96. Glutamate 98 is a Mg(2+) binding site. Substrate is bound by residues 99–102 (SHNH) and arginine 121. The active-site Proton acceptor is the histidine 100. Aspartate 122 provides a ligand contact to Mg(2+). Glutamine 245 serves as a coordination point for substrate. Aspartate 273 contributes to the Mg(2+) binding site. A substrate-binding site is contributed by 317–319 (ETQ). 2 residues coordinate ATP: aspartate 495 and glycine 532. A Mg(2+)-binding site is contributed by asparagine 533. Serine 535 contacts substrate.

The protein belongs to the FGAMS family. As to quaternary structure, monomer. Part of the FGAM synthase complex composed of 1 PurL, 1 PurQ and 2 PurS subunits.

Its subcellular location is the cytoplasm. The enzyme catalyses N(2)-formyl-N(1)-(5-phospho-beta-D-ribosyl)glycinamide + L-glutamine + ATP + H2O = 2-formamido-N(1)-(5-O-phospho-beta-D-ribosyl)acetamidine + L-glutamate + ADP + phosphate + H(+). It participates in purine metabolism; IMP biosynthesis via de novo pathway; 5-amino-1-(5-phospho-D-ribosyl)imidazole from N(2)-formyl-N(1)-(5-phospho-D-ribosyl)glycinamide: step 1/2. Its function is as follows. Part of the phosphoribosylformylglycinamidine synthase complex involved in the purines biosynthetic pathway. Catalyzes the ATP-dependent conversion of formylglycinamide ribonucleotide (FGAR) and glutamine to yield formylglycinamidine ribonucleotide (FGAM) and glutamate. The FGAM synthase complex is composed of three subunits. PurQ produces an ammonia molecule by converting glutamine to glutamate. PurL transfers the ammonia molecule to FGAR to form FGAM in an ATP-dependent manner. PurS interacts with PurQ and PurL and is thought to assist in the transfer of the ammonia molecule from PurQ to PurL. The protein is Phosphoribosylformylglycinamidine synthase subunit PurL of Staphylococcus haemolyticus (strain JCSC1435).